The sequence spans 486 residues: Protein nucleotidyltransferase YdiU (486 aa).

8 residues coordinate ATP: Gly-90, Gly-92, Arg-93, Lys-113, Asp-125, Gly-126, Arg-176, and Arg-183. Catalysis depends on Asp-252, which acts as the Proton acceptor. Asn-253 and Asp-262 together coordinate Mg(2+). Asp-262 serves as a coordination point for ATP.

It belongs to the SELO family. It depends on Mg(2+) as a cofactor. Mn(2+) serves as cofactor.

The enzyme catalyses L-seryl-[protein] + ATP = 3-O-(5'-adenylyl)-L-seryl-[protein] + diphosphate. The catalysed reaction is L-threonyl-[protein] + ATP = 3-O-(5'-adenylyl)-L-threonyl-[protein] + diphosphate. It catalyses the reaction L-tyrosyl-[protein] + ATP = O-(5'-adenylyl)-L-tyrosyl-[protein] + diphosphate. It carries out the reaction L-histidyl-[protein] + UTP = N(tele)-(5'-uridylyl)-L-histidyl-[protein] + diphosphate. The enzyme catalyses L-seryl-[protein] + UTP = O-(5'-uridylyl)-L-seryl-[protein] + diphosphate. The catalysed reaction is L-tyrosyl-[protein] + UTP = O-(5'-uridylyl)-L-tyrosyl-[protein] + diphosphate. Functionally, nucleotidyltransferase involved in the post-translational modification of proteins. It can catalyze the addition of adenosine monophosphate (AMP) or uridine monophosphate (UMP) to a protein, resulting in modifications known as AMPylation and UMPylation. This chain is Protein nucleotidyltransferase YdiU, found in Pseudomonas aeruginosa (strain UCBPP-PA14).